Consider the following 554-residue polypeptide: Serine/threonine-protein phosphatase 2B catalytic subunit (554 aa).

Asp119, His121, and Asp147 together coordinate Fe cation. 2 residues coordinate Zn(2+): Asp147 and Asn179. His180 functions as the Proton donor in the catalytic mechanism. Positions 228 and 310 each coordinate Zn(2+). The tract at residues 411 to 433 is disordered; that stretch reads LKESAPTQHKQPAPSENENKADQ. Residues 415-426 show a composition bias toward polar residues; sequence APTQHKQPAPSE.

This sequence belongs to the PPP phosphatase family. PP-2B subfamily. As to quaternary structure, composed of two components (A and B), the A component is the catalytic subunit and the B component confers calcium sensitivity. Fe(3+) is required as a cofactor. Zn(2+) serves as cofactor.

It carries out the reaction O-phospho-L-seryl-[protein] + H2O = L-seryl-[protein] + phosphate. The enzyme catalyses O-phospho-L-threonyl-[protein] + H2O = L-threonyl-[protein] + phosphate. In terms of biological role, calcium-dependent, calmodulin-stimulated protein phosphatase. This subunit may have a role in the calmodulin activation of calcineurin. Appears to be involved in cytokinesis, mating, transport, nuclear and spindle pole body positioning, and cell shape. This Schizosaccharomyces pombe (strain 972 / ATCC 24843) (Fission yeast) protein is Serine/threonine-protein phosphatase 2B catalytic subunit (ppb1).